Reading from the N-terminus, the 234-residue chain is Lipoprotein-releasing system ATP-binding protein LolD (234 aa).

The ABC transporter domain maps to 7–234 (LLCNNLCKKY…QDELTVTGAL (228 aa)). 43–50 (GSSGSGKS) provides a ligand contact to ATP.

Belongs to the ABC transporter superfamily. Lipoprotein translocase (TC 3.A.1.125) family. As to quaternary structure, the complex is composed of two ATP-binding proteins (LolD) and two transmembrane proteins (LolC and LolE).

The protein localises to the cell inner membrane. Its function is as follows. Part of the ABC transporter complex LolCDE involved in the translocation of mature outer membrane-directed lipoproteins, from the inner membrane to the periplasmic chaperone, LolA. Responsible for the formation of the LolA-lipoprotein complex in an ATP-dependent manner. The sequence is that of Lipoprotein-releasing system ATP-binding protein LolD from Photorhabdus laumondii subsp. laumondii (strain DSM 15139 / CIP 105565 / TT01) (Photorhabdus luminescens subsp. laumondii).